A 160-amino-acid polypeptide reads, in one-letter code: SsrA-binding protein (160 aa).

The protein belongs to the SmpB family.

It is found in the cytoplasm. Functionally, required for rescue of stalled ribosomes mediated by trans-translation. Binds to transfer-messenger RNA (tmRNA), required for stable association of tmRNA with ribosomes. tmRNA and SmpB together mimic tRNA shape, replacing the anticodon stem-loop with SmpB. tmRNA is encoded by the ssrA gene; the 2 termini fold to resemble tRNA(Ala) and it encodes a 'tag peptide', a short internal open reading frame. During trans-translation Ala-aminoacylated tmRNA acts like a tRNA, entering the A-site of stalled ribosomes, displacing the stalled mRNA. The ribosome then switches to translate the ORF on the tmRNA; the nascent peptide is terminated with the 'tag peptide' encoded by the tmRNA and targeted for degradation. The ribosome is freed to recommence translation, which seems to be the essential function of trans-translation. In Mannheimia succiniciproducens (strain KCTC 0769BP / MBEL55E), this protein is SsrA-binding protein.